Consider the following 421-residue polypeptide: MWYHRLSHLHSRLQDLLKGGVIYPALPQPNFKSLLPLAVHWHHTASKSLTCAWQQHEDHFELKYANTVMRFDYVWLRDHCRSASCYNSKTHQRSLDTASVDLCIKPKTIRLDETTLFFTWPDGHVTKYDLNWLVKNSYEGQKQKVIQPRILWNAEIYQQAQVPSVDCQSFLETNEGLKKFLQNFLLYGIAFVENVPPTQEHTEKLAERISLIRETIYGRMWYFTSDFSRGDTAYTKLALDRHTDTTYFQEPCGIQVFHCLKHEGTGGRTLLVDGFYAAEQVLQKAPEEFELLSKVPLKHEYIEDVGECHNHMIGIGPVLNIYPWNKELYLIRYNNYDRAVINTVPYDVVHRWYTAHRTLTIELRRPENEFWVKLKPGRVLFIDNWRVLHGRECFTGYRQLCGCYLTRDDVLNTARLLGLQA.

The N-terminal 15 residues, 1 to 15 (MWYHRLSHLHSRLQD), are a transit peptide targeting the mitochondrion. An N6-acetyllysine mark is found at K179 and K236. Positions 242, 244, and 389 each coordinate Fe cation.

It belongs to the gamma-BBH/TMLD family. Homodimer. Fe(2+) is required as a cofactor. Requires L-ascorbate as cofactor. As to expression, all isoforms, but isoform 8, are widely expressed in adult and fetal tissues. Isoform 8 is restricted to heart and skeletal muscle.

It localises to the mitochondrion matrix. It carries out the reaction N(6),N(6),N(6)-trimethyl-L-lysine + 2-oxoglutarate + O2 = (3S)-3-hydroxy-N(6),N(6),N(6)-trimethyl-L-lysine + succinate + CO2. The protein operates within amine and polyamine biosynthesis; carnitine biosynthesis. Converts trimethyllysine (TML) into hydroxytrimethyllysine (HTML). The chain is Trimethyllysine dioxygenase, mitochondrial (TMLHE) from Homo sapiens (Human).